Reading from the N-terminus, the 623-residue chain is DNA mismatch repair protein MutL (623 aa).

The segment covering 353-368 has biased composition (polar residues); sequence AQQSAPRPANSYSPAS. The tract at residues 353-389 is disordered; that stretch reads AQQSAPRPANSYSPASWRTAPPAPRSEWSPQTAQTAH.

It belongs to the DNA mismatch repair MutL/HexB family.

Its function is as follows. This protein is involved in the repair of mismatches in DNA. It is required for dam-dependent methyl-directed DNA mismatch repair. May act as a 'molecular matchmaker', a protein that promotes the formation of a stable complex between two or more DNA-binding proteins in an ATP-dependent manner without itself being part of a final effector complex. This chain is DNA mismatch repair protein MutL, found in Brucella melitensis biotype 2 (strain ATCC 23457).